The following is a 370-amino-acid chain: Pantothenate kinase 3 (370 aa).

The active-site Proton acceptor is the glutamate 138. Residues serine 192, serine 195, and arginine 207 each contribute to the acetyl-CoA site.

Belongs to the type II pantothenate kinase family. In terms of assembly, homodimer. As to expression, highly expressed in the liver.

Its subcellular location is the cytoplasm. It catalyses the reaction (R)-pantothenate + ATP = (R)-4'-phosphopantothenate + ADP + H(+). The protein operates within cofactor biosynthesis; coenzyme A biosynthesis; CoA from (R)-pantothenate: step 1/5. Its activity is regulated as follows. Subject to allosteric regulation, exists in two distinct conformational states, a catalytically incompetent (or open) conformation stabilized by the binding of acetyl(acyl)-CoA, and a catalytically competent (or closed) conformation stabilized by ATP-binding. Inhibited by acetyl-CoA and its thioesters which act as allosteric inhibitors and compete with the ATP-binding site. Inhibited by sulfonylureas and thiazolidinediones. Activated by oleoylethanolamide, palmitoyl-carnitine and oleoyl-carnitine. In terms of biological role, catalyzes the phosphorylation of pantothenate to generate 4'-phosphopantothenate in the first and rate-determining step of coenzyme A (CoA) synthesis. The sequence is that of Pantothenate kinase 3 (PANK3) from Homo sapiens (Human).